Here is a 57-residue protein sequence, read N- to C-terminus: uncharacterized protein (57 aa).

The stretch at 9–45 (NWQEEIRKIIIERVRREAKKRLLEETRKLRMEMKSSK) forms a coiled coil.

This is an uncharacterized protein from Archaeoglobus fulgidus (strain ATCC 49558 / DSM 4304 / JCM 9628 / NBRC 100126 / VC-16).